Consider the following 418-residue polypeptide: Glutamyl-tRNA reductase (418 aa).

Residues 49–52, Ser-106, 111–113, and Gln-117 each bind substrate; these read TCNR and EPQ. The Nucleophile role is filled by Cys-50. Position 186–191 (186–191) interacts with NADP(+); the sequence is GAGEMI.

Belongs to the glutamyl-tRNA reductase family. In terms of assembly, homodimer.

The catalysed reaction is (S)-4-amino-5-oxopentanoate + tRNA(Glu) + NADP(+) = L-glutamyl-tRNA(Glu) + NADPH + H(+). Its pathway is porphyrin-containing compound metabolism; protoporphyrin-IX biosynthesis; 5-aminolevulinate from L-glutamyl-tRNA(Glu): step 1/2. In terms of biological role, catalyzes the NADPH-dependent reduction of glutamyl-tRNA(Glu) to glutamate 1-semialdehyde (GSA). This is Glutamyl-tRNA reductase from Alcanivorax borkumensis (strain ATCC 700651 / DSM 11573 / NCIMB 13689 / SK2).